Reading from the N-terminus, the 572-residue chain is MIKERVTPPFQASGGSGVVMAESHIISSEAPPKSNPGLNIRTNCRMILNLLREKDCSVTFSPEQPLTPVTDLAVGFSNLSTFSGETPKRCLDLSNLGDETAPLPTESPDRMSSGKLESPKTQFVQFDGLFTPDLAWKAKKCPKRNMNSVLPHLLCSTPSFKKASGGQRSLSNKENEGELFKNPNCKPVALLLPQEVVDSQLSPTPENKVDISLDEDCEMNILGSPISADPPCLDGAHDDIKMQNLDGFADFFSVDEEEMENPPGAVGNLSCSMAILLSGPLLNQDVEISNVNNISLNRSRLYRSPSMPEKLDRPMLKRPVRPLNSETPVRVKRRRSTSSPLQPEEENCQPQRRGTSLKKTLSLCDVDISSVLDEDCGHRQLIGDFSKVYALPTVTGRHQDLRYITGETLAALMHGDFNSLVEKFFIIDCRYPYEYDGGHIKSAFNLHRQDEVTDYFLQQPLTPLMAQKRLIIIFHCEFSSERGPKMCRSLREEDRASNDYPSLYYPELYLLKGGYKDFFPEYKELCEPQSYCPMHHQDFREDLLKFRTKCKTSVGDRKRREPEFRLTGQRLG.

2 disordered regions span residues 95–117 (NLGD…GKLE) and 304–354 (SPSM…QRRG). Positions 420–527 (LVEKFFIIDC…FFPEYKELCE (108 aa)) constitute a Rhodanese domain. The active site involves Cys476.

This sequence belongs to the MPI phosphatase family.

The catalysed reaction is O-phospho-L-tyrosyl-[protein] + H2O = L-tyrosyl-[protein] + phosphate. Functionally, this protein functions as a dosage-dependent inducer in mitotic control. It is a tyrosine protein phosphatase required for progression of the cell cycle. It may directly dephosphorylate p34(cdc2) and activate the p34(cdc2) kinase activity. This chain is M-phase inducer phosphatase 3 (cdc25-3), found in Xenopus laevis (African clawed frog).